Reading from the N-terminus, the 518-residue chain is Cytochrome P450 monooxygenase COX1 (518 aa).

The chain crosses the membrane as a helical span at residues 7–25 (VLIALSSIVVAYFVKTALA). Asparagine 48, asparagine 100, asparagine 292, asparagine 302, and asparagine 351 each carry an N-linked (GlcNAc...) asparagine glycan. Cysteine 450 lines the heme pocket. N-linked (GlcNAc...) asparagine glycosylation occurs at asparagine 457.

This sequence belongs to the cytochrome P450 family. The cofactor is heme.

The protein resides in the membrane. The protein operates within secondary metabolite biosynthesis. In terms of biological role, cytochrome P450 monooxygenase; part of the gene cluster that mediates the biosynthesis of alpha-cuprenene and oxidized derivatives. The alpha-cuprenene synthase COP6 is the only sesquiterpene synthase identified in C.cinereus that appears to be part of a biosynthetic gene cluster and is highly specific since it catalyzes the cyclization of (2E,6E)-farnesyl diphosphate into only one product, alpha-cuprenene. The cytochrome P450 monooxygenase COX2 then oxidizes the cyclohexadiene ring of alpha-cuprenene at positions 1 and 4, yielding first alpha-cuparene, followed by alpha-cuparophenol and a further yet unidentified compound resulting from one additional oxidation step. The cytochrome P450 monooxygenase COX1 then likely catalyzes the oxidation at position 9 of the pentane ring of alpha-cuprenene to give the corresponding hydroxy or ketone derivatives. The polypeptide is Cytochrome P450 monooxygenase COX1 (Coprinopsis cinerea (strain Okayama-7 / 130 / ATCC MYA-4618 / FGSC 9003) (Inky cap fungus)).